The primary structure comprises 583 residues: Bifunctional dihydrofolate reductase-thymidylate synthase (583 aa).

In terms of domain architecture, DHFR spans 9–229 (DIYAICACCK…TTLDFVIYSK (221 aa)). 36–42 (GLGNEGG) is a binding site for NADP(+). Asp51 is a binding site for substrate. NADP(+) contacts are provided by residues 104 to 106 (KAS) and 125 to 128 (LSRT). 3 residues coordinate substrate: Ile165, Tyr171, and Thr186. 166–173 (GGASVYKE) is an NADP(+) binding site. Residues 298–583 (HPEYQYLNII…HDKISMDMAA (286 aa)) are thymidylate synthase. Arg320 lines the dUMP pocket. Residue Cys465 is part of the active site. DUMP-binding positions include His466, 484 to 488 (QRSCD), Asn496, and 526 to 528 (HVY).

The protein in the N-terminal section; belongs to the dihydrofolate reductase family. It in the C-terminal section; belongs to the thymidylate synthase family. In terms of assembly, homodimer.

It carries out the reaction (6S)-5,6,7,8-tetrahydrofolate + NADP(+) = 7,8-dihydrofolate + NADPH + H(+). It catalyses the reaction dUMP + (6R)-5,10-methylene-5,6,7,8-tetrahydrofolate = 7,8-dihydrofolate + dTMP. It participates in cofactor biosynthesis; tetrahydrofolate biosynthesis; 5,6,7,8-tetrahydrofolate from 7,8-dihydrofolate: step 1/1. Bifunctional enzyme. Involved in de novo dTMP biosynthesis. Key enzyme in folate metabolism. Catalyzes an essential reaction for de novo glycine and purine synthesis, DNA precursor synthesis, and for the conversion of dUMP to dTMP. The chain is Bifunctional dihydrofolate reductase-thymidylate synthase from Plasmodium chabaudi.